A 680-amino-acid polypeptide reads, in one-letter code: Harmonin-binding protein USHBP1 (680 aa).

The span at 1–15 (MSARATRPRSRRGRH) shows a compositional bias: basic residues. 2 disordered regions span residues 1–51 (MSAR…YLGP) and 134–161 (KSVEAEDRDQGAPGPFGDEKEDAGPGQQ). Residues 179–218 (NREDELACTQASLQDAQAEKETLQRQVQELEDSLMQMEAS) adopt a coiled-coil conformation. Disordered stretches follow at residues 220–247 (PTPILRAGRRNSNSSTSGAERRPWVPQD) and 384–405 (TMEVETPQPSSEGSGVDKPTPE). Coiled coils occupy residues 363–386 (TKGDLQAAEKEASRLLMKKEATME) and 467–506 (QIQQDLAATRDRLADLVLRLQLTQREKRGLELREAALRAQ). Residues 524–549 (FAGDGSSGGSSEDPSSEEEAGEDRQQ) are disordered. Positions 573 to 662 (QELSASLARA…QAEELAVLTA (90 aa)) form a coiled coil.

Belongs to the MCC family. In terms of assembly, interacts via its C-terminus with the first PDZ domain of USH1C.

This chain is Harmonin-binding protein USHBP1, found in Mus musculus (Mouse).